A 127-amino-acid chain; its full sequence is MRHRKSGRQLNRNSSHRQAMFRNMASSLVSHEIIKTTLPKAKELRRVVEPLITLAKEDSVANRRLAFARTRNIETVAKLFNELGPRFAQRAGGYTRILKCGFRAGDNAPMAYIELVDRPETAAAVEE.

This sequence belongs to the bacterial ribosomal protein bL17 family. As to quaternary structure, part of the 50S ribosomal subunit. Contacts protein L32.

The protein is Large ribosomal subunit protein bL17 of Mannheimia succiniciproducens (strain KCTC 0769BP / MBEL55E).